A 90-amino-acid polypeptide reads, in one-letter code: Acylphosphatase (90 aa).

The 87-residue stretch at 4-90 (RMYVKVYGIV…KGEFNNFDTY (87 aa)) folds into the Acylphosphatase-like domain. Active-site residues include Arg19 and Asn37.

Belongs to the acylphosphatase family.

The catalysed reaction is an acyl phosphate + H2O = a carboxylate + phosphate + H(+). This Sulfurisphaera tokodaii (strain DSM 16993 / JCM 10545 / NBRC 100140 / 7) (Sulfolobus tokodaii) protein is Acylphosphatase (acyP).